We begin with the raw amino-acid sequence, 252 residues long: Imidazole glycerol phosphate synthase subunit HisF (252 aa).

Residues D13 and D132 contribute to the active site.

This sequence belongs to the HisA/HisF family. In terms of assembly, heterodimer of HisH and HisF.

It localises to the cytoplasm. The catalysed reaction is 5-[(5-phospho-1-deoxy-D-ribulos-1-ylimino)methylamino]-1-(5-phospho-beta-D-ribosyl)imidazole-4-carboxamide + L-glutamine = D-erythro-1-(imidazol-4-yl)glycerol 3-phosphate + 5-amino-1-(5-phospho-beta-D-ribosyl)imidazole-4-carboxamide + L-glutamate + H(+). The protein operates within amino-acid biosynthesis; L-histidine biosynthesis; L-histidine from 5-phospho-alpha-D-ribose 1-diphosphate: step 5/9. IGPS catalyzes the conversion of PRFAR and glutamine to IGP, AICAR and glutamate. The HisF subunit catalyzes the cyclization activity that produces IGP and AICAR from PRFAR using the ammonia provided by the HisH subunit. This Campylobacter curvus (strain 525.92) protein is Imidazole glycerol phosphate synthase subunit HisF.